The chain runs to 532 residues: 2,3-bisphosphoglycerate-independent phosphoglycerate mutase (532 aa).

Residues D15 and S65 each contribute to the Mn(2+) site. The active-site Phosphoserine intermediate is S65. Substrate is bound by residues H126, 156-157 (RD), R188, R194, 258-261 (RPDR), and K331. Mn(2+) is bound by residues D398, H402, D439, H440, and H457.

This sequence belongs to the BPG-independent phosphoglycerate mutase family. In terms of assembly, monomer. Mn(2+) is required as a cofactor.

It carries out the reaction (2R)-2-phosphoglycerate = (2R)-3-phosphoglycerate. Its pathway is carbohydrate degradation; glycolysis; pyruvate from D-glyceraldehyde 3-phosphate: step 3/5. Catalyzes the interconversion of 2-phosphoglycerate and 3-phosphoglycerate. This Rippkaea orientalis (strain PCC 8801 / RF-1) (Cyanothece sp. (strain PCC 8801)) protein is 2,3-bisphosphoglycerate-independent phosphoglycerate mutase.